The sequence spans 59 residues: Cortexin domain-containing 1 protein (59 aa).

Residues 17 to 37 (LTLACFVFLCLFLVVMIIRCA) traverse the membrane as a helical segment.

It is found in the membrane. The chain is Cortexin domain-containing 1 protein from Homo sapiens (Human).